Here is a 281-residue protein sequence, read N- to C-terminus: Phosphonates import ATP-binding protein PhnC (281 aa).

The ABC transporter domain occupies 2-245; sequence FELKDVTRRF…AVKEIYGTDK (244 aa). An ATP-binding site is contributed by 34 to 41; the sequence is GRSGAGKS.

It belongs to the ABC transporter superfamily. Phosphonates importer (TC 3.A.1.9.1) family. As to quaternary structure, the complex is composed of two ATP-binding proteins (PhnC), two transmembrane proteins (PhnE) and a solute-binding protein (PhnD).

It is found in the cell inner membrane. The catalysed reaction is phosphonate(out) + ATP + H2O = phosphonate(in) + ADP + phosphate + H(+). Functionally, part of the ABC transporter complex PhnCDE involved in phosphonates import. Responsible for energy coupling to the transport system. The polypeptide is Phosphonates import ATP-binding protein PhnC (Rhizobium etli (strain ATCC 51251 / DSM 11541 / JCM 21823 / NBRC 15573 / CFN 42)).